We begin with the raw amino-acid sequence, 161 residues long: Cyclic pyranopterin monophosphate synthase (161 aa).

Substrate-binding positions include 75 to 77 and 115 to 116; these read MCH and ME. Asp-130 is a catalytic residue.

It belongs to the MoaC family. Homohexamer; trimer of dimers.

It carries out the reaction (8S)-3',8-cyclo-7,8-dihydroguanosine 5'-triphosphate = cyclic pyranopterin phosphate + diphosphate. The protein operates within cofactor biosynthesis; molybdopterin biosynthesis. Functionally, catalyzes the conversion of (8S)-3',8-cyclo-7,8-dihydroguanosine 5'-triphosphate to cyclic pyranopterin monophosphate (cPMP). In Bacillus mycoides (strain KBAB4) (Bacillus weihenstephanensis), this protein is Cyclic pyranopterin monophosphate synthase.